Here is an 81-residue protein sequence, read N- to C-terminus: Defensin-like protein 115 (81 aa).

A signal peptide spans 1–24 (MAITKKMLVVFLLAFLFVTSSVHC). 4 disulfide bridges follow: cysteine 40/cysteine 78, cysteine 46/cysteine 69, cysteine 54/cysteine 76, and cysteine 58/cysteine 77.

This sequence belongs to the DEFL family.

The protein resides in the secreted. The chain is Defensin-like protein 115 from Arabidopsis thaliana (Mouse-ear cress).